The sequence spans 330 residues: Delta-aminolevulinic acid dehydratase (330 aa).

Residues cysteine 122, cysteine 124, histidine 131, and cysteine 132 each contribute to the Zn(2+) site. Lysine 199 acts as the Schiff-base intermediate with substrate in catalysis. The residue at position 199 (lysine 199) is an N6-succinyllysine. Arginine 209 contributes to the 5-aminolevulinate binding site. Serine 215 is modified (phosphoserine). Arginine 221 lines the 5-aminolevulinate pocket. Residue cysteine 223 coordinates Zn(2+). The active-site Schiff-base intermediate with substrate is the lysine 252. At lysine 252 the chain carries N6-succinyllysine. 5-aminolevulinate-binding residues include serine 279 and tyrosine 318.

Belongs to the ALAD family. In terms of assembly, homooctamer; active form. Homohexamer; low activity form. The cofactor is Zn(2+).

It is found in the cytoplasm. Its subcellular location is the cytosol. The catalysed reaction is 2 5-aminolevulinate = porphobilinogen + 2 H2O + H(+). The protein operates within porphyrin-containing compound metabolism; protoporphyrin-IX biosynthesis; coproporphyrinogen-III from 5-aminolevulinate: step 1/4. With respect to regulation, can alternate between a fully active homooctamer and a low-activity homohexamer. A bound magnesium ion may promote the assembly of the fully active homooctamer. The magnesium-binding site is absent in the low-activity homohexamer. Inhibited by compounds that favor the hexameric state. Inhibited by divalent lead ions. The lead ions partially displace the zinc cofactor. Catalyzes an early step in the biosynthesis of tetrapyrroles. Binds two molecules of 5-aminolevulinate per subunit, each at a distinct site, and catalyzes their condensation to form porphobilinogen. The chain is Delta-aminolevulinic acid dehydratase (Alad) from Mus musculus (Mouse).